Reading from the N-terminus, the 506-residue chain is Histidine ammonia-lyase (506 aa).

Positions 141-143 (ASG) form a cross-link, 5-imidazolinone (Ala-Gly). Ser142 carries the 2,3-didehydroalanine (Ser) modification.

The protein belongs to the PAL/histidase family. Post-translationally, contains an active site 4-methylidene-imidazol-5-one (MIO), which is formed autocatalytically by cyclization and dehydration of residues Ala-Ser-Gly.

The protein localises to the cytoplasm. The catalysed reaction is L-histidine = trans-urocanate + NH4(+). The protein operates within amino-acid degradation; L-histidine degradation into L-glutamate; N-formimidoyl-L-glutamate from L-histidine: step 1/3. The chain is Histidine ammonia-lyase from Burkholderia multivorans (strain ATCC 17616 / 249).